Consider the following 618-residue polypeptide: MKPPDRPTPGRTDRILGVMGGMLRACAVPGQEGPPERDPLGPGSTKTESDCIEEDQTGQREPEVLAWAPQPESYSIAVSEGSMSASAVSGLAALSGPSSGLSSDPCSPIPPGPVTGLRRWLDHSKHCLSVETEAESGQTGQCENWTLGPTLTTGQELPELTLLTTLLEGPGDKAQPAEEETLSQAPKNEEEQKKMALERSMFVLGELVETERTYEDDLGQIVEGYMATMATQGVPESLRGRDRIVFGNIQQIYEWHRDYFLQELQQCLKDPDWLAQLFIKHERRLHMYVVYCQNKPKSEHVLSEFGDSYFEELRQQLGHRLQLNDLLIKPVQRIMKYQLLLKDFLKYYRRAGKDTEELEQAVEVMCFVPKRCNDMMSLGRLRGFEGKLTAQGKLLGQDTFLVTEPEAGGLLSSRGRERRVFLFEQIIIFSEALGGGGRGGAQPGYVYKNSIKVSCLGLEGNLQGNPCRFALTSRGPEGGIQRYVLQASDPAVSQAWIKQVAQILESQRDFLNALQSPIEYQRRESQTNSLGRPGGPWVGSPGRMRPGDLAQASMHTPINGSLPSLLLLPRGEVSRVLLPLDTQALSDTPQTPHDSPALPTVNTPPCQARLAKLDEDEL.

Disordered stretches follow at residues 26 to 63 (CAVP…REPE) and 169 to 193 (GPGD…EEQK). The DH domain occupies 199–375 (RSMFVLGELV…CFVPKRCNDM (177 aa)). Residues 317 to 338 (LGHRLQLNDLLIKPVQRIMKYQ) form an important for binding to Rho GTPases region. A PH domain is found at 387-505 (KLTAQGKLLG…WIKQVAQILE (119 aa)). The tract at residues 506 to 532 (SQRDFLNALQSPIEYQRRESQTNSLGR) is sufficient to bind activated GNAQ. Disordered stretches follow at residues 521–556 (QRRE…SMHT) and 584–604 (ALSD…VNTP). Residues 584–593 (ALSDTPQTPH) show a composition bias toward polar residues.

In terms of assembly, interacts with activated GNAQ and GNA11. Interacts (via the DH domain) with POPDC1 (via the C-terminus cytoplasmic tail). Interacts with RHOA, CDC42 and RAC1. As to expression, highly expressed in excitable tissues, such as brain, heart and muscle. Elevated expression in hippocampus and cerebellum.

The protein resides in the cytoplasm. It localises to the myofibril. The protein localises to the sarcomere. Its subcellular location is the cell membrane. Its function is as follows. May play a role in actin cytoskeleton reorganization in different tissues since its activation induces formation of actin stress fibers. It works as a guanine nucleotide exchange factor for Rho family of small GTPases. Links specifically G alpha q/11-coupled receptors to RHOA activation. May be an important regulator of processes involved in axon and dendrite formation. In neurons seems to be an exchange factor primarily for RAC1. Involved in skeletal myogenesis. The polypeptide is Rho guanine nucleotide exchange factor 25 (Arhgef25) (Mus musculus (Mouse)).